The sequence spans 353 residues: Thiamine-phosphate synthase (353 aa).

The segment at 1 to 128 is unknown; sequence MKSMPVAPIA…AASAAAIRYG (128 aa). The interval 129–353 is thiamine-phosphate synthase; it reads LYDLEVTVLQ…TSLQLLEALR (225 aa). Residues 185-189 and Asn-217 contribute to the 4-amino-2-methyl-5-(diphosphooxymethyl)pyrimidine site; that span reads QYRNK. Residues Asp-218 and Asp-237 each coordinate Mg(2+). Ser-256 serves as a coordination point for 4-amino-2-methyl-5-(diphosphooxymethyl)pyrimidine. A 2-[(2R,5Z)-2-carboxy-4-methylthiazol-5(2H)-ylidene]ethyl phosphate-binding site is contributed by 282-284; sequence TAT. Residue Lys-285 coordinates 4-amino-2-methyl-5-(diphosphooxymethyl)pyrimidine. Gly-312 serves as a coordination point for 2-[(2R,5Z)-2-carboxy-4-methylthiazol-5(2H)-ylidene]ethyl phosphate.

The protein belongs to the thiamine-phosphate synthase family. The cofactor is Mg(2+).

It carries out the reaction 2-[(2R,5Z)-2-carboxy-4-methylthiazol-5(2H)-ylidene]ethyl phosphate + 4-amino-2-methyl-5-(diphosphooxymethyl)pyrimidine + 2 H(+) = thiamine phosphate + CO2 + diphosphate. The enzyme catalyses 2-(2-carboxy-4-methylthiazol-5-yl)ethyl phosphate + 4-amino-2-methyl-5-(diphosphooxymethyl)pyrimidine + 2 H(+) = thiamine phosphate + CO2 + diphosphate. It catalyses the reaction 4-methyl-5-(2-phosphooxyethyl)-thiazole + 4-amino-2-methyl-5-(diphosphooxymethyl)pyrimidine + H(+) = thiamine phosphate + diphosphate. Its pathway is cofactor biosynthesis; thiamine diphosphate biosynthesis; thiamine phosphate from 4-amino-2-methyl-5-diphosphomethylpyrimidine and 4-methyl-5-(2-phosphoethyl)-thiazole: step 1/1. Its function is as follows. Condenses 4-methyl-5-(beta-hydroxyethyl)thiazole monophosphate (THZ-P) and 2-methyl-4-amino-5-hydroxymethyl pyrimidine pyrophosphate (HMP-PP) to form thiamine monophosphate (TMP). This Prochlorococcus marinus (strain MIT 9303) protein is Thiamine-phosphate synthase.